Reading from the N-terminus, the 990-residue chain is Bacteriophage adsorption protein A (990 aa).

Positions 1–27 (MKENNLNRVIGWSGLLLTSLLSTSALA) are cleaved as a signal peptide. TPR repeat units lie at residues 81–114 (IPLTLYLAEAYRHFGHDDRARLLLEDQLKRHPGD), 612–645 (ANAYVARATIYRQRHNVPAAVSDLRAALELEPNN), and 646–679 (SNTQAALGYALWDSGDIAQSREMLEPAHKGLPDD).

As to quaternary structure, (Microbial infection) Interacts with N4 phage non-contractile sheath protein; this interaction is essential for viral adsorption to the host.

Its subcellular location is the cell outer membrane. In terms of biological role, (Microbial infection) Allows N4 phage attachment by binding to the viral non-contractile sheath protein. This chain is Bacteriophage adsorption protein A (nfrA), found in Escherichia coli (strain K12).